Consider the following 313-residue polypeptide: Methionyl-tRNA formyltransferase (313 aa).

Residue 111–114 coordinates (6S)-5,6,7,8-tetrahydrofolate; that stretch reads SLLP.

This sequence belongs to the Fmt family.

It catalyses the reaction L-methionyl-tRNA(fMet) + (6R)-10-formyltetrahydrofolate = N-formyl-L-methionyl-tRNA(fMet) + (6S)-5,6,7,8-tetrahydrofolate + H(+). Functionally, attaches a formyl group to the free amino group of methionyl-tRNA(fMet). The formyl group appears to play a dual role in the initiator identity of N-formylmethionyl-tRNA by promoting its recognition by IF2 and preventing the misappropriation of this tRNA by the elongation apparatus. In Mesoplasma florum (strain ATCC 33453 / NBRC 100688 / NCTC 11704 / L1) (Acholeplasma florum), this protein is Methionyl-tRNA formyltransferase.